The primary structure comprises 419 residues: Acetyl transferase GW6a (419 aa).

Residues 12 to 210 (VRVREFDVEK…GHPVHAHRLP (199 aa)) form the N-acetyltransferase domain. Residues 44-68 (VHDHADDGDGAAAKEKKKTKTKTKK) form a disordered region. A compositionally biased stretch (basic residues) spans 58-68 (EKKKTKTKTKK).

It belongs to the acetyltransferase family. Interacts (via C-terminus) with HDR3 (via N-terminus). In terms of processing, ubiquitinated at Lys-63 by HDR3. Polyubiquitination of GW6A delays its degradation by the 26S proteasome and enhances GW6A histone acetyltransferase activity. In terms of tissue distribution, expressed in roots, leaf blades, leaf sheaths, shoot apical meristem and young panicles.

The protein resides in the nucleus. Functionally, possesses intrinsic histone acetyltransferase activity and acts as a positive regulator of grain weight, hull size, yield, and plant biomass. Regulates postitively grain weight and yield by enlarging spikelet hulls via increasing cell number and accelerating grain filling. In vitro, catalyzes the acetylation of histone H4 at Lys-6 (H4K5ac), Lys-13 (H4K12ac) and Lys-17 (H4K16ac). Involved in the regulation of plastochron (the time interval between leaf initiation event). The polypeptide is Acetyl transferase GW6a (Oryza sativa subsp. japonica (Rice)).